Here is a 376-residue protein sequence, read N- to C-terminus: Succinyl-diaminopimelate desuccinylase (376 aa).

H66 is a Zn(2+) binding site. The active site involves D68. D99 contacts Zn(2+). The Proton acceptor role is filled by E133. Residues E134, E162, and H348 each contribute to the Zn(2+) site.

Belongs to the peptidase M20A family. DapE subfamily. Homodimer. Requires Zn(2+) as cofactor. Co(2+) is required as a cofactor.

The catalysed reaction is N-succinyl-(2S,6S)-2,6-diaminopimelate + H2O = (2S,6S)-2,6-diaminopimelate + succinate. The protein operates within amino-acid biosynthesis; L-lysine biosynthesis via DAP pathway; LL-2,6-diaminopimelate from (S)-tetrahydrodipicolinate (succinylase route): step 3/3. Its function is as follows. Catalyzes the hydrolysis of N-succinyl-L,L-diaminopimelic acid (SDAP), forming succinate and LL-2,6-diaminopimelate (DAP), an intermediate involved in the bacterial biosynthesis of lysine and meso-diaminopimelic acid, an essential component of bacterial cell walls. The protein is Succinyl-diaminopimelate desuccinylase of Xanthomonas oryzae pv. oryzae (strain MAFF 311018).